The primary structure comprises 361 residues: Eukaryotic translation initiation factor 3 subunit F (361 aa).

The segment at 1-86 (MATPAVPVSA…PAPALPGPAL (86 aa)) is disordered. N-acetylalanine is present on Ala-2. Pro residues-rich tracts occupy residues 9–20 (SAPPATPAPVPA) and 30–40 (VPAPTPAPAAA). Residues 41-78 (PVPAAAPASSSDPAAAAATTAAPGQTPASAQAPAQTPA) are compositionally biased toward low complexity. Position 50 is a phosphoserine; by CDK11; in vitro (Ser-50). Positions 96–226 (VRLHPVILAS…IKAYVSTLMG (131 aa)) constitute an MPN domain. Lys-242 carries the post-translational modification N6-acetyllysine. Ser-262 carries the post-translational modification Phosphoserine.

Belongs to the eIF-3 subunit F family. As to quaternary structure, component of the eukaryotic translation initiation factor 3 (eIF-3) complex, which is composed of 13 subunits: EIF3A, EIF3B, EIF3C, EIF3D, EIF3E, EIF3F, EIF3G, EIF3H, EIF3I, EIF3J, EIF3K, EIF3L and EIF3M. The eIF-3 complex appears to include 3 stable modules: module A is composed of EIF3A, EIF3B, EIF3G and EIF3I; module B is composed of EIF3F, EIF3H, and EIF3M; and module C is composed of EIF3C, EIF3D, EIF3E, EIF3K and EIF3L. EIF3C of module C binds EIF3B of module A and EIF3H of module B, thereby linking the three modules. EIF3J is a labile subunit that binds to the eIF-3 complex via EIF3B. The eIF-3 complex interacts with RPS6KB1 under conditions of nutrient depletion. Mitogenic stimulation leads to binding and activation of a complex composed of MTOR and RPTOR, leading to phosphorylation and release of RPS6KB1 and binding of EIF4B to eIF-3. Interacts with RNF139; the interaction leads to protein translation inhibitions in a ubiquitination-dependent manner. Interacts with DTX1, the interaction is required for deubiquitinating activity towards NOTCH1. Post-translationally, phosphorylation is enhanced upon serum stimulation. Phosphorylated during apoptosis by caspase-processed CDK11.

Its subcellular location is the cytoplasm. It carries out the reaction Thiol-dependent hydrolysis of ester, thioester, amide, peptide and isopeptide bonds formed by the C-terminal Gly of ubiquitin (a 76-residue protein attached to proteins as an intracellular targeting signal).. Component of the eukaryotic translation initiation factor 3 (eIF-3) complex, which is required for several steps in the initiation of protein synthesis. The eIF-3 complex associates with the 40S ribosome and facilitates the recruitment of eIF-1, eIF-1A, eIF-2:GTP:methionyl-tRNAi and eIF-5 to form the 43S pre-initiation complex (43S PIC). The eIF-3 complex stimulates mRNA recruitment to the 43S PIC and scanning of the mRNA for AUG recognition. The eIF-3 complex is also required for disassembly and recycling of post-termination ribosomal complexes and subsequently prevents premature joining of the 40S and 60S ribosomal subunits prior to initiation. The eIF-3 complex specifically targets and initiates translation of a subset of mRNAs involved in cell proliferation, including cell cycling, differentiation and apoptosis, and uses different modes of RNA stem-loop binding to exert either translational activation or repression. Functionally, deubiquitinates activated NOTCH1, promoting its nuclear import, thereby acting as a positive regulator of Notch signaling. The chain is Eukaryotic translation initiation factor 3 subunit F from Pan troglodytes (Chimpanzee).